The primary structure comprises 262 residues: MWSQIPGTLMRTSSLPAVIEASGNDDWKKRKEAQSLKRLEVKKKRIERRNSLTCNTSKEAAGQSPEEMNANTDKLVSSDETIASANESHSSGKHLVKGLPPKYQATITSQDSSSAMRKKPNSAFKGTAITEEQNSSSSVPSSGEAISSVTAPSLPALSLVPITATLGSREDQSILGRAGARANGMGDVERRMMQEMPGVFTKGLSNGSRVEGFLYKYSKGEVRIVCICHGSFLTPSEFVEHAGAGKVDNPLRHIVVSATPNL.

The interval 48 to 69 (RRNSLTCNTSKEAAGQSPEEMN) is disordered.

The protein belongs to the Ninja family.

The protein localises to the nucleus. The sequence is that of Ninja-family protein 3 from Zea mays (Maize).